Consider the following 162-residue polypeptide: Caveolin-2 (162 aa).

Residues 1 to 86 are Cytoplasmic-facing; sequence MGLETEKADV…FEISKYVIYK (86 aa). The residue at position 19 (tyrosine 19) is a Phosphotyrosine; by SRC. Phosphoserine occurs at positions 20 and 23. Position 27 is a phosphotyrosine; by SRC (tyrosine 27). Serine 36 is modified (phosphoserine). The helical intramembrane region spans 87-107; it reads FLTLFLAIPLAFAAGILFATL. At 108 to 162 the chain is on the cytoplasmic side; it reads SCLHIWIIMPFVKTCLMVLPSVQTIWKSITDVVIAPLCTSVGRSFSSVSLQLSHD.

This sequence belongs to the caveolin family. As to quaternary structure, monomer or homodimer. Interacts with CAV1; the interaction forms a stable heterooligomeric complex that is required for targeting to lipid rafts and for caveolae formation. Tyrosine phosphorylated forms do not form heterooligomers with the Tyr-19-phosphorylated form existing as a monomer or dimer, and the Tyr-27-form as a monomer only. Interacts (tyrosine phosphorylated form) with the SH2 domain-containing proteins, RASA1, NCK1 and SRC. Interacts (tyrosine phosphorylated form) with INSR, the interaction (Tyr-27-phosphorylated form) is increased on insulin stimulation. Interacts (Tyr-19 phosphorylated form) with MAPK1 (phosphorylated form); the interaction, promoted by insulin, leads to nuclear location and MAPK1 activation. Interacts with STAT3; the interaction is increased on insulin-induced tyrosine phosphorylation leading to STAT activation. Post-translationally, phosphorylated on serine and tyrosine residues. CAV1 promotes phosphorylation on Ser-23 which then targets the complex to the plasma membrane, lipid rafts and caveolae. Phosphorylation on Ser-36 appears to modulate mitosis in endothelial cells. Phosphorylation on both Tyr-19 and Tyr-27 is required for insulin-induced 'Ser-727' phosphorylation of STAT3 and its activation. Phosphorylation on Tyr-19 is required for insulin-induced phosphorylation of MAPK1 and DNA binding of STAT3. Tyrosine phosphorylation is induced by both EGF and insulin (By. similarity).

It localises to the nucleus. It is found in the cytoplasm. Its subcellular location is the golgi apparatus membrane. The protein resides in the cell membrane. The protein localises to the membrane. It localises to the caveola. Functionally, may act as a scaffolding protein within caveolar membranes. Interacts directly with G-protein alpha subunits and can functionally regulate their activity. Acts as an accessory protein in conjunction with CAV1 in targeting to lipid rafts and driving caveolae formation. The Ser-36 phosphorylated form has a role in modulating mitosis in endothelial cells. Positive regulator of cellular mitogenesis of the MAPK signaling pathway. Required for the insulin-stimulated nuclear translocation and activation of MAPK1 and STAT3, and the subsequent regulation of cell cycle progression. In Neofelis nebulosa (Clouded leopard), this protein is Caveolin-2 (CAV2).